Reading from the N-terminus, the 58-residue chain is Putative transcript Y 13 protein (58 aa).

The helical transmembrane segment at 17 to 37 (LLGWDLNLSLFLGLCLMLLLA) threads the bilayer.

It localises to the membrane. The polypeptide is Putative transcript Y 13 protein (TTTY13) (Homo sapiens (Human)).